Here is a 448-residue protein sequence, read N- to C-terminus: tRNA wybutosine-synthesizing protein 2 homolog (448 aa).

S-adenosyl-L-methionine-binding positions include S218, K225, E265, and 293 to 294; that span reads DN.

It belongs to the class I-like SAM-binding methyltransferase superfamily. TRM5/TYW2 family.

The enzyme catalyses 4-demethylwyosine(37) in tRNA(Phe) + S-adenosyl-L-methionine = 4-demethyl-7-[(3S)-3-amino-3-carboxypropyl]wyosine(37) in tRNA(Phe) + S-methyl-5'-thioadenosine + H(+). It participates in tRNA modification; wybutosine-tRNA(Phe) biosynthesis. Functionally, S-adenosyl-L-methionine-dependent transferase that acts as a component of the wybutosine biosynthesis pathway. Wybutosine is a hyper modified guanosine with a tricyclic base found at the 3'-position adjacent to the anticodon of eukaryotic phenylalanine tRNA. Catalyzes the transfer of the alpha-amino-alpha-carboxypropyl (acp) group from S-adenosyl-L-methionine to the C-7 position of 4-demethylwyosine (imG-14) to produce wybutosine-86. This chain is tRNA wybutosine-synthesizing protein 2 homolog (TRMT12), found in Homo sapiens (Human).